Here is a 347-residue protein sequence, read N- to C-terminus: NADH-ubiquinone oxidoreductase chain 2 (347 aa).

A run of 10 helical transmembrane segments spans residues isoleucine 13–leucine 33, alanine 55–leucine 75, leucine 96–proline 116, proline 123–tyrosine 143, asparagine 150–leucine 170, isoleucine 178–proline 198, threonine 201–leucine 221, threonine 247–isoleucine 267, isoleucine 277–isoleucine 297, and phenylalanine 325–methionine 345.

This sequence belongs to the complex I subunit 2 family. As to quaternary structure, core subunit of respiratory chain NADH dehydrogenase (Complex I) which is composed of 45 different subunits. Interacts with TMEM242.

It is found in the mitochondrion inner membrane. It carries out the reaction a ubiquinone + NADH + 5 H(+)(in) = a ubiquinol + NAD(+) + 4 H(+)(out). Core subunit of the mitochondrial membrane respiratory chain NADH dehydrogenase (Complex I) which catalyzes electron transfer from NADH through the respiratory chain, using ubiquinone as an electron acceptor. Essential for the catalytic activity and assembly of complex I. This chain is NADH-ubiquinone oxidoreductase chain 2, found in Gorilla gorilla gorilla (Western lowland gorilla).